We begin with the raw amino-acid sequence, 366 residues long: Zinc transporter ZIP13 (366 aa).

Residues 1 to 5 lie on the Lumenal side of the membrane; the sequence is MTKQK. Residues 6–26 form a helical membrane-spanning segment; that stretch reads LLLNGTFSLILIVACEAQQLP. Residues 27 to 57 are Cytoplasmic-facing; that stretch reads RSHAASSSGPLCEKEAESWGNLLSSERLDAW. Residues 58–78 form a helical membrane-spanning segment; sequence ICSLIGSFMVGLSGIFPLLVI. Topologically, residues 79–97 are lumenal; that stretch reads PFETGAALRSEAGSRRLKQ. Residues 98 to 118 form a helical membrane-spanning segment; sequence LLSFAIGGLLGNVFLHLLPEA. Topologically, residues 119–137 are cytoplasmic; it reads WAYTCSAAAGEGQSFQQQK. The chain crosses the membrane as a helical span at residues 138 to 158; it reads LLGLWVIIGFLTFLALEKIFL. Residues 159–225 lie on the Lumenal side of the membrane; it reads EKEEEECPGV…NRIKISGYLN (67 aa). Residues 183 to 205 are disordered; the sequence is SGYPPSKVAGKSQRAEKNSTQCN. Residues 226-246 form a helical membrane-spanning segment; sequence LLANTIDNFTHGLAVAASFLV. Topologically, residues 247–282 are cytoplasmic; it reads SRKVGFLTTMAILLHEIPHEVGDFAILLRAGFDRWS. Residues 261 to 266 carry the XEXPHE-motif motif; it reads HEIPHE. A helical membrane pass occupies residues 283–303; it reads AAKMQLSTALGGIVGACFAIC. The Lumenal segment spans residues 304-313; sequence AQSPKGAGET. The helical transmembrane segment at 314–334 threads the bilayer; sequence VAWILPFTSGGFLYIALVNVV. At 335–343 the chain is on the cytoplasmic side; sequence PDLLEEKNP. The chain crosses the membrane as a helical span at residues 344–364; the sequence is WNSLQQILLLCTGITVMVLLA. Residues 365 to 366 lie on the Lumenal side of the membrane; the sequence is HN.

Belongs to the ZIP transporter (TC 2.A.5) family. In terms of assembly, homodimer.

The protein localises to the golgi apparatus membrane. It localises to the cytoplasmic vesicle membrane. It is found in the endoplasmic reticulum membrane. It catalyses the reaction Zn(2+)(in) = Zn(2+)(out). Its function is as follows. Functions as a zinc transporter transporting Zn(2+) from the Golgi apparatus to the cytosol and thus influences the zinc level at least in areas of the cytosol. The polypeptide is Zinc transporter ZIP13 (Gallus gallus (Chicken)).